A 631-amino-acid polypeptide reads, in one-letter code: Glutamyl-tRNA(Gln) amidotransferase subunit E (631 aa).

Belongs to the GatB/GatE family. GatE subfamily. As to quaternary structure, heterodimer of GatD and GatE.

It catalyses the reaction L-glutamyl-tRNA(Gln) + L-glutamine + ATP + H2O = L-glutaminyl-tRNA(Gln) + L-glutamate + ADP + phosphate + H(+). Its function is as follows. Allows the formation of correctly charged Gln-tRNA(Gln) through the transamidation of misacylated Glu-tRNA(Gln) in organisms which lack glutaminyl-tRNA synthetase. The reaction takes place in the presence of glutamine and ATP through an activated gamma-phospho-Glu-tRNA(Gln). The GatDE system is specific for glutamate and does not act on aspartate. This is Glutamyl-tRNA(Gln) amidotransferase subunit E from Methanococcus maripaludis (strain C6 / ATCC BAA-1332).